The chain runs to 302 residues: Actin maturation protease (302 aa).

Residues 1-26 form a disordered region; that stretch reads MPHTNEDPTAQQAGVILDPPPPLPPP. The peptidase C39-like stretch occupies residues 85–205; that stretch reads SLIQEGPQCG…WAVISGVLFG (121 aa). Residue C93 is part of the active site.

It belongs to the ACTMAP family.

The protein resides in the cytoplasm. It carries out the reaction N-terminal N(alpha)-acetyl-L-methionyl-L-aspartyl-[protein] + H2O = N-terminal L-aspartyl-[protein] + N-acetyl-L-methionine. It catalyses the reaction N-terminal N(alpha)-acetyl-L-methionyl-L-glutamyl-[protein] + H2O = N-terminal L-glutamyl-[protein] + N-acetyl-L-methionine. The enzyme catalyses N-terminal N(alpha)-acetyl-L-cysteinyl-L-aspartyl-[protein] + H2O = N-terminal L-aspartyl-[protein] + N-acetyl-L-cysteine. The catalysed reaction is N-terminal N(alpha)-acetyl-L-cysteinyl-L-glutamyl-[protein] + H2O = N-terminal L-glutamyl-[protein] + N-acetyl-L-cysteine. Its function is as follows. Actin maturation protease that specifically mediates the cleavage of immature acetylated N-terminal actin, thereby contributing to actin maturation. Cleaves N-terminal acetylated methionine of immature cytoplasmic beta- and gamma-actin after translation. Cleaves N-terminal acetylated cysteine of muscle alpha-actin after canonical removal of N-terminal methionine. The polypeptide is Actin maturation protease (Xenopus tropicalis (Western clawed frog)).